The chain runs to 282 residues: Pantothenate synthetase (282 aa).

An ATP-binding site is contributed by 30–37; sequence MGALHAGH. His37 serves as the catalytic Proton donor. Gln61 contacts (R)-pantoate. Beta-alanine is bound at residue Gln61. 147 to 150 contributes to the ATP binding site; the sequence is GEKD. Gln153 contacts (R)-pantoate. Residues Val177 and 185-188 contribute to the ATP site; that span reads LSSR.

Belongs to the pantothenate synthetase family. Homodimer.

It localises to the cytoplasm. It catalyses the reaction (R)-pantoate + beta-alanine + ATP = (R)-pantothenate + AMP + diphosphate + H(+). It participates in cofactor biosynthesis; (R)-pantothenate biosynthesis; (R)-pantothenate from (R)-pantoate and beta-alanine: step 1/1. In terms of biological role, catalyzes the condensation of pantoate with beta-alanine in an ATP-dependent reaction via a pantoyl-adenylate intermediate. The sequence is that of Pantothenate synthetase from Phocaeicola vulgatus (strain ATCC 8482 / DSM 1447 / JCM 5826 / CCUG 4940 / NBRC 14291 / NCTC 11154) (Bacteroides vulgatus).